The chain runs to 320 residues: ATP-dependent 6-phosphofructokinase (320 aa).

ATP is bound at residue G11. 21–25 provides a ligand contact to ADP; sequence RAVVR. ATP-binding positions include 72-73 and 102-105; these read RC and GDGS. D103 lines the Mg(2+) pocket. Substrate is bound at residue 125–127; that stretch reads TID. The Proton acceptor role is filled by D127. R154 is a binding site for ADP. Substrate is bound by residues R162 and 169-171; that span reads MGR. Residues 185-187 and 214-216 contribute to the ADP site; these read GAE and KTH. Substrate contacts are provided by residues E223, R244, and 250-253; that span reads HIQR.

This sequence belongs to the phosphofructokinase type A (PFKA) family. ATP-dependent PFK group I subfamily. Prokaryotic clade 'B1' sub-subfamily. In terms of assembly, homotetramer. The cofactor is Mg(2+).

Its subcellular location is the cytoplasm. It catalyses the reaction beta-D-fructose 6-phosphate + ATP = beta-D-fructose 1,6-bisphosphate + ADP + H(+). Its pathway is carbohydrate degradation; glycolysis; D-glyceraldehyde 3-phosphate and glycerone phosphate from D-glucose: step 3/4. Allosterically activated by ADP and other diphosphonucleosides, and allosterically inhibited by phosphoenolpyruvate. Functionally, catalyzes the phosphorylation of D-fructose 6-phosphate to fructose 1,6-bisphosphate by ATP, the first committing step of glycolysis. The polypeptide is ATP-dependent 6-phosphofructokinase (Clostridium botulinum (strain Eklund 17B / Type B)).